The following is a 664-amino-acid chain: Macoilin-1 (664 aa).

Transmembrane regions (helical) follow at residues 28-48 (TFLY…DFVL), 75-95 (AFSV…LLFI), 120-140 (VCLP…AIRF), and 154-174 (FAAH…KSYV). A disordered region spans residues 206–225 (QMLQRQERETEEATSKGMSE). A compositionally biased stretch (basic and acidic residues) spans 210-219 (RQERETEEAT). 5 N-linked (GlcNAc...) asparagine glycosylation sites follow: Asn234, Asn336, Asn339, Asn348, and Asn655. Disordered regions lie at residues 315 to 364 (VGAG…LAPH) and 644 to 664 (FMDT…PLKK). Over residues 334 to 348 (SHNSTNGSVPSSSSN) the composition is skewed to low complexity. Residues 644–658 (FMDTSPSSLDPNASV) are compositionally biased toward polar residues.

The protein belongs to the macoilin family.

The protein localises to the nucleus membrane. It localises to the rough endoplasmic reticulum membrane. Its function is as follows. May play a role in the regulation of neuronal activity. The protein is Macoilin-1 of Danio rerio (Zebrafish).